Consider the following 824-residue polypeptide: Kinesin-like protein KIFC3 (824 aa).

Positions 27–79 (EPKPGMARPAPASPAARPFPHTGQGRLRTGRGKDILPSGEEDSTSRTAARPSL) are disordered. The span at 33–46 (ARPAPASPAARPFP) shows a compositional bias: low complexity. Coiled-coil stretches lie at residues 100-360 (LTVQ…ENLA) and 393-430 (LLQE…LQLR). A Kinesin motor domain is found at 443–766 (NIRVIARVRP…LRFAERVRSV (324 aa)). 526 to 533 (GQTGAGKT) serves as a coordination point for ATP. A disordered region spans residues 771-824 (GSRRTELGSWSSQEHLEWEPACQTPQPTARAHSAPGSGTSSRPGSIRRKLQPSA). Residues Ser-811 and Ser-815 each carry the phosphoserine modification. Positions 815-824 (SIRRKLQPSA) are enriched in basic residues.

It belongs to the TRAFAC class myosin-kinesin ATPase superfamily. Kinesin family. Interacts with annexin XIIIB. In terms of tissue distribution, predominant expression in the kidney, testis and ovary. Also expressed in brain, heart, liver, lung and uterus.

Its subcellular location is the cytoplasm. It localises to the cytoskeleton. It is found in the cytoplasmic vesicle membrane. The protein resides in the cell junction. The protein localises to the adherens junction. Its subcellular location is the microtubule organizing center. It localises to the centrosome. Its function is as follows. Minus-end microtubule-dependent motor protein. Involved in apically targeted transport. Required for zonula adherens maintenance. This chain is Kinesin-like protein KIFC3 (Kifc3), found in Mus musculus (Mouse).